Reading from the N-terminus, the 879-residue chain is Pentatricopeptide repeat-containing protein At1g71210, mitochondrial (879 aa).

The N-terminal 44 residues, 1 to 44 (MLRCWSVTVERSCEGMLLRRRILSLSASSFRNFTSGNNGDAIPF), are a transit peptide targeting the mitochondrion. PPR repeat units lie at residues 181 to 215 (SLRLCDALVVGYAVAGRTDIALQHFGNMRFRGLDL), 216 to 246 (DSFGYHVLLNALVEEKCFDSFDVIFDQISVR), 250 to 280 (CAVTHSILVKKFCKQGKLDEAEDYLRALLPN), 285 to 319 (CGSGLGILVDALCSKRKFQEATKLLDEIKLVGTVN), 320 to 355 (MDRAYNIWIRALIKAGFLNNPADFLQKISPLEGCEL), 356 to 390 (EVFRYNSMVFQLLKENNLDGVYDILTEMMVRGVSP), 391 to 425 (NKKTMNAALCFFCKAGFVDEALELYRSRSEIGFAP), 426 to 460 (TAMSYNYLIHTLCANESVEQAYDVLKGAIDRGHFL), 461 to 495 (GGKTFSTLTNALCWKGKPDMARELVIAAAERDLLP), 496 to 530 (KRIAGCKIISALCDVGKVEDALMINELFNKSGVDT), 531 to 565 (SFKMFTSLIYGSITLMRGDIAAKLIIRMQEKGYTP), 566 to 597 (TRSLYRNVIQCVCEMESGEKNFFTTLLKFQLS), 602 to 636 (KVQAYNLFIEGAGFAGKPKLARLVYDMMDRDGITP), 637 to 667 (TVASNILMLQSYLKNEKIADALHFFHDLREQ), 671 to 705 (KKRLYQVMIVGLCKANKLDDAMHFLEEMKGEGLQP), and 706 to 740 (SIECYEVNIQKLCNEEKYDEAVGLVNEFRKSGRRI).

It belongs to the PPR family. P subfamily.

Its subcellular location is the mitochondrion. The chain is Pentatricopeptide repeat-containing protein At1g71210, mitochondrial from Arabidopsis thaliana (Mouse-ear cress).